The following is a 472-amino-acid chain: Uronate isomerase (472 aa).

Belongs to the metallo-dependent hydrolases superfamily. Uronate isomerase family.

The catalysed reaction is D-glucuronate = D-fructuronate. It catalyses the reaction aldehydo-D-galacturonate = keto-D-tagaturonate. It participates in carbohydrate metabolism; pentose and glucuronate interconversion. This Oceanobacillus iheyensis (strain DSM 14371 / CIP 107618 / JCM 11309 / KCTC 3954 / HTE831) protein is Uronate isomerase.